The chain runs to 865 residues: V-type proton ATPase 116 kDa subunit a 3 (865 aa).

At 1 to 409 the chain is on the cytoplasmic side; it reads MGSIYRSEHM…VNPAPWTIIS (409 aa). Positions 51-121 form a coiled coil; it reads FVNEVRRCDE…NKNCKVLKNN (71 aa). The chain crosses the membrane as a helical span at residues 410–430; it reads FPFLFAVMFGDAGHGIIMLIA. Residues 431-453 lie on the Extracellular side of the membrane; the sequence is ASAFVIFEKKLISMKIKDEIFNT. A helical transmembrane segment spans residues 454–474; the sequence is FFGGRYVVLLMGMFAIYTGFI. Residues 475–556 are Cytoplasmic-facing; sequence YNDFYSKSVN…FLNPMKMKTS (82 aa). A helical membrane pass occupies residues 557-577; the sequence is ILLGISQMAFGIMLSLMNHIG. N578 carries N-linked (GlcNAc...) asparagine glycosylation. Topologically, residues 578-583 are extracellular; the sequence is NRSVVD. A helical membrane pass occupies residues 584–604; sequence IVFVFIPQCLFLGCIFVYLCL. Residues 605–623 lie on the Cytoplasmic side of the membrane; sequence QVLMKWIFFYVKPAYIFGR. A helical transmembrane segment spans residues 624-644; the sequence is LYPGSNCAPSLLIGLINMFMV. Over 645–688 the chain is Extracellular; that stretch reads KSRDASFAHDVGTAAGKEWVIVNGQNVTYTINDQCYLQQWYPNQ. 2 N-linked (GlcNAc...) asparagine glycosylation sites follow: N670 and N687. Residues 689 to 709 form a helical membrane-spanning segment; it reads SLVELILLLIAVVSVPVMLLV. At 710–798 the chain is on the cytoplasmic side; the sequence is KPFYIRWRHS…LTMGGWGGSA (89 aa). A helical membrane pass occupies residues 799–819; that stretch reads AITILFYFIFSILSVCILILM. The Extracellular portion of the chain corresponds to 820 to 865; it reads EGLSAFLHAIRLHWVEFQSKFYGGTGIQFEPFCFTKIIRVYEGLDQ.

The protein belongs to the V-ATPase 116 kDa subunit family. As to quaternary structure, V-ATPase is a heteromultimeric enzyme made up of two complexes: the ATP-hydrolytic V1 complex and the proton translocation V0 complex. The V1 complex consists of three catalytic AB heterodimers that form a heterohexamer, three peripheral stalks each consisting of EG heterodimers, one central rotor including subunits D and F, and the regulatory subunits C and H. The proton translocation complex V0 consists of the proton transport subunit a, a ring of proteolipid subunits c9c'', rotary subunit d, subunits e and f, and the accessory subunits vah-19/Ac45 and vah-20/PRR. Interacts with V-type proton ATPase subunit C vha-11.

Its subcellular location is the apical cell membrane. In terms of biological role, subunit of the V0 complex of vacuolar(H+)-ATPase (V-ATPase), a multisubunit enzyme composed of a peripheral complex (V1) that hydrolyzes ATP and a membrane integral complex (V0) that translocates protons. V-ATPase is responsible for acidifying and maintaining the pH of intracellular compartments and in some cell types, is targeted to the plasma membrane, where it is responsible for acidifying the extracellular environment. In the intestine, required for the rhythmic defecation behavior by promoting acidification in the gut lumen following defecation. Also, luminal acidification is required for nutrient uptake. In Caenorhabditis elegans, this protein is V-type proton ATPase 116 kDa subunit a 3.